We begin with the raw amino-acid sequence, 137 residues long: uncharacterized protein (137 aa).

The helical transmembrane segment at 75 to 91 threads the bilayer; sequence MFLDAMVILAVASGVSL. Residues 93–116 are disordered; sequence PQLPGRRSHNASTPGAKKPGKDHG.

The protein resides in the membrane. This is an uncharacterized protein from Saccharomyces cerevisiae (strain ATCC 204508 / S288c) (Baker's yeast).